The primary structure comprises 352 residues: Holliday junction branch migration complex subunit RuvB (352 aa).

The interval 1–42 (MAIVSSSAGRADSQPPAAKSRVVDASPLPEEASPAREDGLRP) is disordered. The tract at residues 13–201 (SQPPAAKSRV…FGLIQRLEFY (189 aa)) is large ATPase domain (RuvB-L). The span at 33–42 (SPAREDGLRP) shows a compositional bias: basic and acidic residues. Leu-40, Arg-41, Gly-82, Lys-85, Thr-86, Thr-87, Arg-191, Tyr-201, and Arg-238 together coordinate ATP. Residue Thr-86 coordinates Mg(2+). The segment at 202–273 (GLEDLQAIVE…LVDEALTLHR (72 aa)) is small ATPAse domain (RuvB-S). Residues 276–352 (ARGLDASDRR…RRHLGWPELP (77 aa)) form a head domain (RuvB-H) region. Residues Arg-331 and Arg-336 each contribute to the DNA site.

It belongs to the RuvB family. As to quaternary structure, homohexamer. Forms an RuvA(8)-RuvB(12)-Holliday junction (HJ) complex. HJ DNA is sandwiched between 2 RuvA tetramers; dsDNA enters through RuvA and exits via RuvB. An RuvB hexamer assembles on each DNA strand where it exits the tetramer. Each RuvB hexamer is contacted by two RuvA subunits (via domain III) on 2 adjacent RuvB subunits; this complex drives branch migration. In the full resolvosome a probable DNA-RuvA(4)-RuvB(12)-RuvC(2) complex forms which resolves the HJ.

It localises to the cytoplasm. The catalysed reaction is ATP + H2O = ADP + phosphate + H(+). In terms of biological role, the RuvA-RuvB-RuvC complex processes Holliday junction (HJ) DNA during genetic recombination and DNA repair, while the RuvA-RuvB complex plays an important role in the rescue of blocked DNA replication forks via replication fork reversal (RFR). RuvA specifically binds to HJ cruciform DNA, conferring on it an open structure. The RuvB hexamer acts as an ATP-dependent pump, pulling dsDNA into and through the RuvAB complex. RuvB forms 2 homohexamers on either side of HJ DNA bound by 1 or 2 RuvA tetramers; 4 subunits per hexamer contact DNA at a time. Coordinated motions by a converter formed by DNA-disengaged RuvB subunits stimulates ATP hydrolysis and nucleotide exchange. Immobilization of the converter enables RuvB to convert the ATP-contained energy into a lever motion, pulling 2 nucleotides of DNA out of the RuvA tetramer per ATP hydrolyzed, thus driving DNA branch migration. The RuvB motors rotate together with the DNA substrate, which together with the progressing nucleotide cycle form the mechanistic basis for DNA recombination by continuous HJ branch migration. Branch migration allows RuvC to scan DNA until it finds its consensus sequence, where it cleaves and resolves cruciform DNA. This is Holliday junction branch migration complex subunit RuvB from Prochlorococcus marinus (strain MIT 9303).